The following is a 270-amino-acid chain: 5'-AMP-activated protein kinase subunit beta-1 (270 aa).

The disordered stretch occupies residues 1-44; that stretch reads MGNTSSERAALDRQGGHKTPRRDSSGGSKDGDRPKILMDSPEDA. A lipid anchor (N-myristoyl glycine) is attached at glycine 2. Phosphothreonine is present on threonine 4. Residues serine 5 and serine 6 each carry the phosphoserine modification. The span at 9–36 shows a compositional bias: basic and acidic residues; that stretch reads AALDRQGGHKTPRRDSSGGSKDGDRPKI. Threonine 19 carries the post-translational modification Phosphothreonine. Serine 24 and serine 25 each carry phosphoserine; by autocatalysis. Phosphoserine is present on residues serine 40, serine 96, and serine 101. Positions 68–163 are glycogen-binding domain; it reads EVNDKAPAQA…QVKKTDFEVF (96 aa). Phosphoserine; by autocatalysis is present on serine 108. Residue threonine 148 is modified to Phosphothreonine. Phosphoserine is present on serine 182. N6-succinyllysine is present on lysine 201.

This sequence belongs to the 5'-AMP-activated protein kinase beta subunit family. As to quaternary structure, AMPK is a heterotrimer of an alpha catalytic subunit (PRKAA1 or PRKAA2), a beta (PRKAB1 or PRKAB2) and a gamma non-catalytic subunits (PRKAG1, PRKAG2 or PRKAG3). Interacts with FNIP1 and FNIP2. In terms of processing, phosphorylated when associated with the catalytic subunit (PRKAA1 or PRKAA2). Phosphorylated by ULK1; leading to negatively regulate AMPK activity and suggesting the existence of a regulatory feedback loop between ULK1 and AMPK.

Non-catalytic subunit of AMP-activated protein kinase (AMPK), an energy sensor protein kinase that plays a key role in regulating cellular energy metabolism. In response to reduction of intracellular ATP levels, AMPK activates energy-producing pathways and inhibits energy-consuming processes: inhibits protein, carbohydrate and lipid biosynthesis, as well as cell growth and proliferation. AMPK acts via direct phosphorylation of metabolic enzymes, and by longer-term effects via phosphorylation of transcription regulators. Also acts as a regulator of cellular polarity by remodeling the actin cytoskeleton; probably by indirectly activating myosin. Beta non-catalytic subunit acts as a scaffold on which the AMPK complex assembles, via its C-terminus that bridges alpha (PRKAA1 or PRKAA2) and gamma subunits (PRKAG1, PRKAG2 or PRKAG3). The chain is 5'-AMP-activated protein kinase subunit beta-1 (PRKAB1) from Bos taurus (Bovine).